Reading from the N-terminus, the 477-residue chain is Glutamate--tRNA ligase 1 (477 aa).

The 'HIGH' region signature appears at 12 to 22 (PSPTGALHLGN). Positions 253–257 (PLSKR) match the 'KMSKS' region motif. Lys256 contacts ATP.

It belongs to the class-I aminoacyl-tRNA synthetase family. Glutamate--tRNA ligase type 1 subfamily. Monomer.

The protein localises to the cytoplasm. The catalysed reaction is tRNA(Glu) + L-glutamate + ATP = L-glutamyl-tRNA(Glu) + AMP + diphosphate. Its function is as follows. Catalyzes the attachment of glutamate to tRNA(Glu) in a two-step reaction: glutamate is first activated by ATP to form Glu-AMP and then transferred to the acceptor end of tRNA(Glu). This Halorhodospira halophila (strain DSM 244 / SL1) (Ectothiorhodospira halophila (strain DSM 244 / SL1)) protein is Glutamate--tRNA ligase 1.